Reading from the N-terminus, the 352-residue chain is Transcription factor MYB86 (352 aa).

2 consecutive HTH myb-type domains span residues 9–61 (KQKL…INYL) and 62–116 (RPDL…KKKL). DNA-binding regions (H-T-H motif) lie at residues 37–61 (WSSV…INYL) and 89–112 (WSQI…NSCL).

Expressed in stems, flowers and seeds. Weakly expressed in leaves and roots.

The protein localises to the nucleus. Its function is as follows. Probable transcription factor. In Arabidopsis thaliana (Mouse-ear cress), this protein is Transcription factor MYB86 (MYB86).